A 91-amino-acid chain; its full sequence is Protein SPATA45 homolog (91 aa).

Residues Arg42–Tyr91 form a disordered region. Over residues Gly51–Asp70 the composition is skewed to polar residues. Basic and acidic residues predominate over residues Pro76 to Tyr91.

Belongs to the SPATA45 family.

This is Protein SPATA45 homolog from Nematostella vectensis (Starlet sea anemone).